A 191-amino-acid chain; its full sequence is Nucleoside triphosphate pyrophosphatase (191 aa).

Catalysis depends on D70, which acts as the Proton acceptor.

The protein belongs to the Maf family. It depends on a divalent metal cation as a cofactor.

The protein localises to the cytoplasm. The enzyme catalyses a ribonucleoside 5'-triphosphate + H2O = a ribonucleoside 5'-phosphate + diphosphate + H(+). It catalyses the reaction a 2'-deoxyribonucleoside 5'-triphosphate + H2O = a 2'-deoxyribonucleoside 5'-phosphate + diphosphate + H(+). In terms of biological role, nucleoside triphosphate pyrophosphatase. May have a dual role in cell division arrest and in preventing the incorporation of modified nucleotides into cellular nucleic acids. This chain is Nucleoside triphosphate pyrophosphatase, found in Synechococcus sp. (strain WH7803).